The primary structure comprises 256 residues: Nuclear shuttle protein (256 aa).

The Bipartite nuclear localization signal motif lies at asparagine 21 to valine 42. The Nuclear localization signal signature appears at glutamine 81–leucine 96. The segment at glutamate 150 to aspartate 187 is interaction with Arabidopsis thaliana NSI protein.

This sequence belongs to the begomovirus nuclear shuttle protein family. Binds to single-stranded and double-stranded viral DNA. Interacts with the host nuclear shuttle interacting (NSI) protein. This interaction may allow NSP to recruit NSI monomers to the viral genome and thus regulate nuclear export of viral genome by NSP.

It is found in the host nucleus. Its subcellular location is the host cytoplasm. The protein localises to the host cell membrane. Binds to the genomic viral ssDNA, shuttles it into and out of the cell nucleus. Begomoviruses use 2 proteins to transport their DNA from cell to cell. The nuclear shuttle protein (NSP) shuttles it between nucleus and cytoplasm and the movement protein (MP) probably transports the DNA-NSP complex to the cell periphery and facilitates movement across the cell wall. The polypeptide is Nuclear shuttle protein (Pepper huasteco yellow vein virus (PHYVV)).